The sequence spans 442 residues: Exodeoxyribonuclease 7 large subunit (442 aa).

This sequence belongs to the XseA family. As to quaternary structure, heterooligomer composed of large and small subunits.

It localises to the cytoplasm. The catalysed reaction is Exonucleolytic cleavage in either 5'- to 3'- or 3'- to 5'-direction to yield nucleoside 5'-phosphates.. Bidirectionally degrades single-stranded DNA into large acid-insoluble oligonucleotides, which are then degraded further into small acid-soluble oligonucleotides. In Shewanella sediminis (strain HAW-EB3), this protein is Exodeoxyribonuclease 7 large subunit.